A 269-amino-acid polypeptide reads, in one-letter code: 5'-nucleotidase SurE (269 aa).

4 residues coordinate a divalent metal cation: Asp-11, Asp-12, Ser-43, and Asn-101.

This sequence belongs to the SurE nucleotidase family. A divalent metal cation is required as a cofactor.

It is found in the cytoplasm. It catalyses the reaction a ribonucleoside 5'-phosphate + H2O = a ribonucleoside + phosphate. In terms of biological role, nucleotidase that shows phosphatase activity on nucleoside 5'-monophosphates. The protein is 5'-nucleotidase SurE of Synechococcus sp. (strain WH7803).